The primary structure comprises 466 residues: MSLPSRLPAILQAVMQGQPQALADSHYPQWHLAPVNGLLNDPNGFCQVAGRYHLFYQWNPLACDHTYKCWGHWSSADLLHWRHEPIALMPDEEYDRNGCYSGSAVEFEGALTLCYTGNVKFPDGGRTAWQCLATENADGTFRKLGPVLPLPEGYTGHVRDPKVWRQDGRWYMVLGAQDVQQRGKVLLFTASDLREWRLVGEIAGHDVNGLANAGYMWECPDLFPLADTHLLICCPQGLAREAQRFLNTYPAVWMAGRFDAERGIFDHGPLHELDSGFEFYAPQTMQADDGRRLLVGWMGVPDGDEMHQPTRAQGWIHQMTCVRELEWQAGTLYQRPLRELVALRGEAQGWCGQTLPLAPMELAFDLSPDSTLGLDFAGALQLTVNRDGLRLSRRGLQTAEMHHRYWRGEARRLRIFIDRSSVEIFINDGEGVMSSRFFPGYPGQLIFSGATPVAFCRWLLRPCMVE.

Residues 38–41 (LLND), Gln-57, 100–101 (YS), 159–160 (RD), and Glu-218 each bind substrate. Asp-41 is a catalytic residue.

The protein resides in the cytoplasm. It carries out the reaction Hydrolysis of terminal non-reducing beta-D-fructofuranoside residues in beta-D-fructofuranosides.. It functions in the pathway glycan biosynthesis; sucrose metabolism. In terms of biological role, hydrolyzes sucrose and sucrose-6P, but fails to hydrolyze any of the phosphorylated isomers of sucrose and other phospho-D-glucosides, including maltose-6'P and trehalose-6P. The sequence is that of Sucrose-6-phosphate hydrolase (scrB) from Klebsiella pneumoniae.